A 1222-amino-acid polypeptide reads, in one-letter code: BOS complex subunit NOMO1 (1222 aa).

The N-terminal stretch at 1–31 (MLVGQGAGPLGPAVVTAAVVLLLSGVGPAHG) is a signal peptide. Residues 32-1155 (SEDIVVGCGG…NPTRKLPEQD (1124 aa)) lie on the Extracellular side of the membrane. Asn50, Asn218, and Asn618 each carry an N-linked (GlcNAc...) asparagine glycan. The helical transmembrane segment at 1156-1176 (IAQGSYIALPLTLLVLLAGYN) threads the bilayer. Topologically, residues 1177-1222 (HDKLIPLLLQLTSRLQGVRALGQAASDNSGPEDAKRQAKKQKTRRT) are cytoplasmic. Residues 1198–1222 (GQAASDNSGPEDAKRQAKKQKTRRT) form a disordered region. Residue Ser1205 is modified to Phosphoserine. A compositionally biased stretch (basic residues) spans 1213–1222 (QAKKQKTRRT).

Component of the back of Sec61 (BOS) complex, composed of NCLN/Nicalin, NOMO (NOMO1, NOMO2 or NOMO3) and TMEM147. The BOS complex is part of the multi-pass translocon (MPT) complex, composed of three subcomplexes, the GEL complex (composed of RAB5IF/OPTI and TMCO1), the BOS complex (composed of NCLN/Nicalin, NOMO and TMEM147) and the PAT complex (composed of WDR83OS/Asterix and CCDC47). The MPT complex associates with the SEC61 complex. Due to the strong similarity between NOMO1, NOMO2 and NOMO3, similar interaction pattern probably occur for the three gene copies. As to expression, expressed in colon tumor tissue and in adjacent normal colonic mucosa.

It is found in the endoplasmic reticulum membrane. Component of the multi-pass translocon (MPT) complex that mediates insertion of multi-pass membrane proteins into the lipid bilayer of membranes. The MPT complex takes over after the SEC61 complex: following membrane insertion of the first few transmembrane segments of proteins by the SEC61 complex, the MPT complex occludes the lateral gate of the SEC61 complex to promote insertion of subsequent transmembrane regions. The sequence is that of BOS complex subunit NOMO1 (NOMO1) from Homo sapiens (Human).